The chain runs to 183 residues: uncharacterized protein (183 aa).

This is an uncharacterized protein from Treponema pallidum (strain Nichols).